The chain runs to 360 residues: MTAKTPLHTTHLACGAKMVDFHGWDMPLHYGSQLNEHHAVRNDAGMFDVSHMTIVDILGAGGRQFLRKLLTNDVDQITHNGKALYSCMCNEHGGIIDDLIVYQRASDNYRVVLNSATRQNDVAWIRAKSEGFAVGLQERRELSMLAVQGPNAIAKTLSILAPAHVDAVSTLTSFECVDVDHWFFARTGYTGEDGLEIIVPNEFVTQLWNDLLHAGVTPCGLGARDTLRLEAGMLLYGQDMDETTTPLESGLAWTVKWEPEDRGFIGMGALVSQKQQGIKRKMVGLTLLDKGIMRHGQKVIIEGCPDGIITSGSYSPTLQQSIALARVPMETGEQVLVDIRGKLIPAKVGKPRFIKQGKPV.

This sequence belongs to the GcvT family. As to quaternary structure, the glycine cleavage system is composed of four proteins: P, T, L and H.

The catalysed reaction is N(6)-[(R)-S(8)-aminomethyldihydrolipoyl]-L-lysyl-[protein] + (6S)-5,6,7,8-tetrahydrofolate = N(6)-[(R)-dihydrolipoyl]-L-lysyl-[protein] + (6R)-5,10-methylene-5,6,7,8-tetrahydrofolate + NH4(+). In terms of biological role, the glycine cleavage system catalyzes the degradation of glycine. The polypeptide is Aminomethyltransferase (Legionella pneumophila subsp. pneumophila (strain Philadelphia 1 / ATCC 33152 / DSM 7513)).